A 531-amino-acid chain; its full sequence is Zinc finger protein 703-B (531 aa).

Positions methionine 1–threonine 10 are enriched in polar residues. Disordered regions lie at residues methionine 1 to alanine 28, serine 88 to isoleucine 249, and valine 295 to alanine 318. 2 stretches are compositionally biased toward low complexity: residues threonine 19–alanine 28 and arginine 113–serine 122. Positions serine 171–glycine 180 are enriched in polar residues. Residues cysteine 183–valine 198 show a composition bias toward basic and acidic residues. Residues asparagine 199–alanine 215 show a composition bias toward polar residues. A compositionally biased stretch (low complexity) spans serine 216 to serine 227. Residues histidine 404 to histidine 432 form a C2H2-type zinc finger.

This sequence belongs to the Elbow/Noc family.

The protein localises to the nucleus. The protein resides in the cytoplasm. In terms of biological role, transcriptional corepressor which does not bind directly to DNA and may regulate transcription through recruitment of histone deacetylases to gene promoters. Regulates cell adhesion, migration and proliferation. Involved in specification of the lateral neural plate border (NPB). May be required for segmental gene expression during hindbrain development. The chain is Zinc finger protein 703-B (znf703-b) from Xenopus laevis (African clawed frog).